A 676-amino-acid chain; its full sequence is RNA helicase NPH-II (676 aa).

In terms of domain architecture, Helicase ATP-binding spans 172 to 347 (FSAWISHRPV…VFLPNPAFIH (176 aa)). 185-192 (GGTGVGKT) contacts ATP. Residues 296–299 (DEVH) carry the DEXH box motif. Positions 366-535 (NPSSRMAYIE…NYILYANKFN (170 aa)) constitute a Helicase C-terminal domain.

Belongs to the DEAD box helicase family. DEAH subfamily. Monomer.

It is found in the virion. It carries out the reaction ATP + H2O = ADP + phosphate + H(+). Functionally, NTP-dependent helicase that catalyzes unidirectional unwinding of 3'tailed duplex RNAs and plays an important role during transcription of early mRNAs, presumably by preventing R-loop formation behind the elongating RNA polymerase. Might also play a role in the export of newly synthesized mRNA chains out of the core into the cytoplasm. Required for replication and propagation of viral particles. This Bos taurus (Bovine) protein is RNA helicase NPH-II (OPG084).